The sequence spans 264 residues: Chanoclavine-I dehydrogenase easD (264 aa).

The signal sequence occupies residues 1–20 (MASVSSKIFAITGGASGIGA). Residues Ile18, Asp66, Arg132, Tyr169, Lys173, and Thr204 each coordinate NADP(+). Tyr169 serves as the catalytic Proton donor. Residue Lys173 is the Lowers pKa of active site Tyr of the active site.

It belongs to the short-chain dehydrogenases/reductases (SDR) family. As to quaternary structure, homotetramer.

It catalyses the reaction chanoclavine-I + NAD(+) = chanoclavine-I aldehyde + NADH + H(+). It functions in the pathway alkaloid biosynthesis; ergot alkaloid biosynthesis. Functionally, chanoclavine-I dehydrogenase; part of the gene cluster that mediates the biosynthesis of fungal ergot alkaloid. DmaW catalyzes the first step of ergot alkaloid biosynthesis by condensing dimethylallyl diphosphate (DMAP) and tryptophan to form 4-dimethylallyl-L-tryptophan. The second step is catalyzed by the methyltransferase easF that methylates 4-dimethylallyl-L-tryptophan in the presence of S-adenosyl-L-methionine, resulting in the formation of 4-dimethylallyl-L-abrine. The catalase easC and the FAD-dependent oxidoreductase easE then transform 4-dimethylallyl-L-abrine to chanoclavine-I which is further oxidized by easD in the presence of NAD(+), resulting in the formation of chanoclavine-I aldehyde. Chanoclavine-I aldehyde is the precursor of ergoamides and ergopeptines in Clavicipitaceae, and clavine-type alcaloids such as fumiclavine in Trichocomaceae. However, the metabolites downstream of chanoclavine-I aldehyde in Arthrodermataceae have not been identified yet. In Arthroderma otae (strain ATCC MYA-4605 / CBS 113480) (Microsporum canis), this protein is Chanoclavine-I dehydrogenase easD.